The sequence spans 123 residues: WAP four-disulfide core domain protein 5 (123 aa).

The signal sequence occupies residues 1–24; the sequence is MRIQSLLLLGALLAVGSQLPAVFG. WAP domains follow at residues 27–73 and 74–121; these read KGEK…CVPR and VSVK…RDPA. Disulfide bonds link cysteine 34–cysteine 62, cysteine 41–cysteine 66, cysteine 49–cysteine 61, cysteine 55–cysteine 70, cysteine 81–cysteine 109, cysteine 88–cysteine 113, cysteine 96–cysteine 108, and cysteine 102–cysteine 117.

Its subcellular location is the secreted. Its function is as follows. Putative acid-stable proteinase inhibitor. The protein is WAP four-disulfide core domain protein 5 (WFDC5) of Papio anubis (Olive baboon).